The following is a 410-amino-acid chain: MMCFRLSPVSGSGLVLSCLLLGAVQSYAFELNLPDSKATCLFAKWKMNFTISYETTTNKTLKTVTISEPHNVTYNGSSCGDDQGVAKIAVQFGSTVSWNVTFTKEESHYVIGSIWLVYNTSDNTTFPGAIPKGSATVISSQSIEIPLDDIFRCNSLLTFKTGNVVQNYWDIHLQAFVQNGTVSKEEFVCEEDKSVTTVRPIIHTTVPPPTTTPTPLPPKVGNYSVSNGNATCLLATMGLQLNVTEEKVPFIFNINPSTTNFTGSCHPQTAQLRLNNSQIKYLDFIFAVKSESHFYLKEVNVSMYMANGSVFSVANNNLSFWDAPLGSSYMCNKEQVVSVSRTFQINTFNLKVQPFNVTKGKYATAQDCSADEDNFLVPIAVGAALAGVLALVLLAYFIGLKRHHTGYEQF.

Residues 1–28 form the signal peptide; the sequence is MMCFRLSPVSGSGLVLSCLLLGAVQSYA. A first lumenal domain region spans residues 29 to 192; sequence FELNLPDSKA…SKEEFVCEED (164 aa). Residues 29–375 lie on the Lumenal side of the membrane; sequence FELNLPDSKA…QDCSADEDNF (347 aa). The cysteines at positions 40 and 79 are disulfide-linked. N-linked (GlcNAc...) asparagine glycans are attached at residues Asn-48, Asn-58, Asn-71, Asn-75, Asn-99, Asn-119, Asn-123, Asn-179, Asn-222, Asn-229, Asn-242, Asn-260, Asn-275, Asn-300, Asn-307, Asn-317, and Asn-356. A disulfide bridge connects residues Cys-153 and Cys-189. Positions 193–228 are hinge; the sequence is KSVTTVRPIIHTTVPPPTTTPTPLPPKVGNYSVSNG. The second lumenal domain stretch occupies residues 229–375; sequence NATCLLATMG…QDCSADEDNF (147 aa). Cys-232 and Cys-265 are disulfide-bonded. A disulfide bond links Cys-331 and Cys-368. The chain crosses the membrane as a helical span at residues 376 to 399; that stretch reads LVPIAVGAALAGVLALVLLAYFIG. Residues 400 to 410 are Cytoplasmic-facing; it reads LKRHHTGYEQF. The tract at residues 401–404 is important for binding and subsequent lysosomal degradation of target proteins; it reads KRHH.

This sequence belongs to the LAMP family. In terms of assembly, monomer. Forms large homooligomers. Interacts (via its cytoplasmic region) with HSPA8; HSPA8 mediates recruitment of proteins with a KFERQ motif to the surface of the lysosome for chaperone-mediated autophagy. Interacts with HSP90 in the lysosome lumen; this enhances LAMP2 stability. Interacts with MLLT11. Interacts with ABCB9. Interacts with FURIN. Interacts with CT55; this interaction may be important for LAMP2 protein stability. Interacts with TMEM175; inhibiting the proton channel activity of TMEM175. Forms a ternary complex with RAB7A and RUFY4 (via RUN domain); the interaction with RAB7A is mediated by RUFY4 (via RUN and coiled coil domains). In terms of processing, extensively N-glycosylated. Contains a minor proportion of O-linked glycans.

It localises to the lysosome membrane. It is found in the endosome membrane. The protein resides in the cell membrane. Its subcellular location is the cytoplasmic vesicle. The protein localises to the autophagosome membrane. Lysosomal membrane glycoprotein which plays an important role in lysosome biogenesis, lysosomal pH regulation and autophagy. Acts as an important regulator of lysosomal lumen pH regulation by acting as a direct inhibitor of the proton channel TMEM175, facilitating lysosomal acidification for optimal hydrolase activity. Plays an important role in chaperone-mediated autophagy, a process that mediates lysosomal degradation of proteins in response to various stresses and as part of the normal turnover of proteins with a long biological half-live. Functions by binding target proteins, such as GAPDH, NLRP3 and MLLT11, and targeting them for lysosomal degradation. In the chaperone-mediated autophagy, acts downstream of chaperones, such as HSPA8/HSC70, which recognize and bind substrate proteins and mediate their recruitment to lysosomes, where target proteins bind LAMP2. Plays a role in lysosomal protein degradation in response to starvation. Required for the fusion of autophagosomes with lysosomes during autophagy. Cells that lack LAMP2 express normal levels of VAMP8, but fail to accumulate STX17 on autophagosomes, which is the most likely explanation for the lack of fusion between autophagosomes and lysosomes. Required for normal degradation of the contents of autophagosomes. Required for efficient MHC class II-mediated presentation of exogenous antigens via its function in lysosomal protein degradation; antigenic peptides generated by proteases in the endosomal/lysosomal compartment are captured by nascent MHC II subunits. Is not required for efficient MHC class II-mediated presentation of endogenous antigens. The polypeptide is Lysosome-associated membrane glycoprotein 2 (LAMP2) (Cricetulus griseus (Chinese hamster)).